A 352-amino-acid chain; its full sequence is Putative KilA-N domain-containing protein 006L (352 aa).

The 109-residue stretch at Thr15–Tyr123 folds into the KilA-N domain. The stretch at Lys129–Glu236 forms a coiled coil.

Belongs to the IIV-6 006L/238R/313L/468L family.

The polypeptide is Putative KilA-N domain-containing protein 006L (Acheta domesticus (House cricket)).